The primary structure comprises 363 residues: UDP-N-acetylglucosamine--N-acetylmuramyl-(pentapeptide) pyrophosphoryl-undecaprenol N-acetylglucosamine transferase (363 aa).

Residues 10 to 12 (TGG), N124, S195, I250, and Q295 each bind UDP-N-acetyl-alpha-D-glucosamine.

It belongs to the glycosyltransferase 28 family. MurG subfamily.

The protein localises to the cell membrane. It catalyses the reaction Mur2Ac(oyl-L-Ala-gamma-D-Glu-L-Lys-D-Ala-D-Ala)-di-trans,octa-cis-undecaprenyl diphosphate + UDP-N-acetyl-alpha-D-glucosamine = beta-D-GlcNAc-(1-&gt;4)-Mur2Ac(oyl-L-Ala-gamma-D-Glu-L-Lys-D-Ala-D-Ala)-di-trans,octa-cis-undecaprenyl diphosphate + UDP + H(+). The protein operates within cell wall biogenesis; peptidoglycan biosynthesis. Functionally, cell wall formation. Catalyzes the transfer of a GlcNAc subunit on undecaprenyl-pyrophosphoryl-MurNAc-pentapeptide (lipid intermediate I) to form undecaprenyl-pyrophosphoryl-MurNAc-(pentapeptide)GlcNAc (lipid intermediate II). This chain is UDP-N-acetylglucosamine--N-acetylmuramyl-(pentapeptide) pyrophosphoryl-undecaprenol N-acetylglucosamine transferase, found in Lactiplantibacillus plantarum (strain ATCC BAA-793 / NCIMB 8826 / WCFS1) (Lactobacillus plantarum).